Consider the following 657-residue polypeptide: Probable potassium transport system protein Kup 1 (657 aa).

12 helical membrane-spanning segments follow: residues 40–60 (VTSGFWALTLGSIGVVFGDIG), 88–108 (VLSLILWALLIVVTAKYVLLL), 135–155 (WFLLALGVVGASMFIGDSMIT), 172–192 (PALEHYVVPLTVLILVLLFAV), 198–218 (ALVASAFGPVMVVWFTCIAVM), 241–261 (FLLSHGTIGLVTLGAVFLAVT), 282–302 (WMFFVLPSLLINYFGQGALVL), 320–340 (LVLPLVGLATAATVIASQAVI), 380–400 (LLLIGVMLLVLLFHTPSNLAS), 402–422 (YGIAVSTTMVADGIMGFVVIW), 432–452 (AAAVILPFVVVDMSFFSANLL), and 454–474 (LLEGAWVPLLFGAAMAGTIWT).

Belongs to the HAK/KUP transporter (TC 2.A.72) family.

It is found in the cell inner membrane. The enzyme catalyses K(+)(in) + H(+)(in) = K(+)(out) + H(+)(out). In terms of biological role, transport of potassium into the cell. Likely operates as a K(+):H(+) symporter. In Bradyrhizobium diazoefficiens (strain JCM 10833 / BCRC 13528 / IAM 13628 / NBRC 14792 / USDA 110), this protein is Probable potassium transport system protein Kup 1.